An 89-amino-acid polypeptide reads, in one-letter code: Elongation factor 1-beta (89 aa).

This sequence belongs to the EF-1-beta/EF-1-delta family.

In terms of biological role, promotes the exchange of GDP for GTP in EF-1-alpha/GDP, thus allowing the regeneration of EF-1-alpha/GTP that could then be used to form the ternary complex EF-1-alpha/GTP/AAtRNA. The polypeptide is Elongation factor 1-beta (Methanocella arvoryzae (strain DSM 22066 / NBRC 105507 / MRE50)).